The primary structure comprises 251 residues: Triosephosphate isomerase (251 aa).

Residue 9–11 (NWK) participates in substrate binding. His-95 serves as the catalytic Electrophile. Glu-167 acts as the Proton acceptor in catalysis. Residues Gly-173, Ser-213, and 234–235 (GG) each bind substrate.

It belongs to the triosephosphate isomerase family. In terms of assembly, homodimer.

The protein resides in the cytoplasm. It carries out the reaction D-glyceraldehyde 3-phosphate = dihydroxyacetone phosphate. It functions in the pathway carbohydrate biosynthesis; gluconeogenesis. Its pathway is carbohydrate degradation; glycolysis; D-glyceraldehyde 3-phosphate from glycerone phosphate: step 1/1. In terms of biological role, involved in the gluconeogenesis. Catalyzes stereospecifically the conversion of dihydroxyacetone phosphate (DHAP) to D-glyceraldehyde-3-phosphate (G3P). The protein is Triosephosphate isomerase of Geobacter metallireducens (strain ATCC 53774 / DSM 7210 / GS-15).